The following is a 180-amino-acid chain: Small ribosomal subunit protein uS5 (180 aa).

The S5 DRBM domain occupies 13–76; sequence LEERVVQINR…EAAKKNLIRV (64 aa).

The protein belongs to the universal ribosomal protein uS5 family. In terms of assembly, part of the 30S ribosomal subunit. Contacts proteins S4 and S8.

With S4 and S12 plays an important role in translational accuracy. Functionally, located at the back of the 30S subunit body where it stabilizes the conformation of the head with respect to the body. This Roseiflexus sp. (strain RS-1) protein is Small ribosomal subunit protein uS5.